A 561-amino-acid chain; its full sequence is Zinc finger protein 394 (561 aa).

The tract at residues 1-61 (MNSSLTAQRR…NYPAASPDPE (61 aa)) is disordered. Ser12 is modified (phosphoserine). Lys40 participates in a covalent cross-link: Glycyl lysine isopeptide (Lys-Gly) (interchain with G-Cter in SUMO2). In terms of domain architecture, SCAN box spans 64 to 146 (RLHFRQLRYQ…AVVRALQRAL (83 aa)). One can recognise a KRAB domain in the interval 155–230 (VTFEDTAVSL…LQEAFQGKRP (76 aa)). The tract at residues 182-201 (ESAQKDSGSTVPPSLESRVE) is disordered. Glycyl lysine isopeptide (Lys-Gly) (interchain with G-Cter in SUMO2) cross-links involve residues Lys203 and Lys228. Residues 231-285 (LFSKCGSTHEDRVEKQSGDPLPLKLENSPEAEGLNSISDVNKNGSIEGEDSKNNE) form a disordered region. A compositionally biased stretch (basic and acidic residues) spans 237-247 (STHEDRVEKQS). Lys254 is covalently cross-linked (Glycyl lysine isopeptide (Lys-Gly) (interchain with G-Cter in SUMO2)). Polar residues predominate over residues 265–274 (NSISDVNKNG). Lys282 is covalently cross-linked (Glycyl lysine isopeptide (Lys-Gly) (interchain with G-Cter in SUMO2)). 7 C2H2-type zinc fingers span residues 358-380 (YKCG…QRIH), 386-408 (YGCQ…QRTH), 414-436 (YTCL…QSTH), 442-463 (FKCE…QRLH), 469-491 (YKCE…HRIH), 497-519 (YGCS…QRIH), and 525-547 (YKCL…QRIH). A Glycyl lysine isopeptide (Lys-Gly) (interchain with G-Cter in SUMO2) cross-link involves residue Lys443.

Belongs to the krueppel C2H2-type zinc-finger protein family.

The protein localises to the nucleus. In terms of biological role, may be involved in transcriptional regulation. The polypeptide is Zinc finger protein 394 (ZNF394) (Homo sapiens (Human)).